The sequence spans 196 residues: uncharacterized protein (196 aa).

It to H.influenzae HI_0431.

This is an uncharacterized protein from Escherichia coli (strain K12).